The chain runs to 85 residues: UPF0291 protein SSA_1878 (85 aa).

A disordered region spans residues 58-85 (GNDVTPEKLRQVQREKGLHGRSLDDPES). Positions 62–85 (TPEKLRQVQREKGLHGRSLDDPES) are enriched in basic and acidic residues.

This sequence belongs to the UPF0291 family.

It is found in the cytoplasm. This is UPF0291 protein SSA_1878 from Streptococcus sanguinis (strain SK36).